The primary structure comprises 213 residues: Large ribosomal subunit protein uL3 (213 aa).

This sequence belongs to the universal ribosomal protein uL3 family. Part of the 50S ribosomal subunit. Forms a cluster with proteins L14 and L19.

Functionally, one of the primary rRNA binding proteins, it binds directly near the 3'-end of the 23S rRNA, where it nucleates assembly of the 50S subunit. This is Large ribosomal subunit protein uL3 from Bifidobacterium longum (strain DJO10A).